The primary structure comprises 264 residues: Flagellar brake protein YcgR 1 (264 aa).

One can recognise a PilZ domain in the interval 132–249 (QRREFFRLES…RLAMIERYIA (118 aa)).

This sequence belongs to the YcgR family. Monomer. Interacts with the flagellar basal bodies.

It is found in the bacterial flagellum basal body. In terms of biological role, acts as a flagellar brake, regulating swimming and swarming in a bis-(3'-5') cyclic diguanylic acid (c-di-GMP)-dependent manner. Binds 1 c-di-GMP dimer per subunit. Increasing levels of c-di-GMP lead to decreased motility. The polypeptide is Flagellar brake protein YcgR 1 (Dechloromonas aromatica (strain RCB)).